A 407-amino-acid polypeptide reads, in one-letter code: Carbamoyl phosphate synthase small chain (407 aa).

The CPSase stretch occupies residues 1–203 (MSQNESGTIA…EPCGEYEGKE (203 aa)). Ser61, Gly255, and Gly257 together coordinate L-glutamine. The Glutamine amidotransferase type-1 domain maps to 207 to 405 (TVAAVDLGIK…CELMKNNSKE (199 aa)). Catalysis depends on Cys283, which acts as the Nucleophile. L-glutamine-binding residues include Phe284, Gln287, Asn325, Gly327, and Phe328. Residues His378 and Glu380 contribute to the active site.

Belongs to the CarA family. As to quaternary structure, composed of two chains; the small (or glutamine) chain promotes the hydrolysis of glutamine to ammonia, which is used by the large (or ammonia) chain to synthesize carbamoyl phosphate. Tetramer of heterodimers (alpha,beta)4.

The catalysed reaction is hydrogencarbonate + L-glutamine + 2 ATP + H2O = carbamoyl phosphate + L-glutamate + 2 ADP + phosphate + 2 H(+). It carries out the reaction L-glutamine + H2O = L-glutamate + NH4(+). It participates in amino-acid biosynthesis; L-arginine biosynthesis; carbamoyl phosphate from bicarbonate: step 1/1. It functions in the pathway pyrimidine metabolism; UMP biosynthesis via de novo pathway; (S)-dihydroorotate from bicarbonate: step 1/3. Small subunit of the glutamine-dependent carbamoyl phosphate synthetase (CPSase). CPSase catalyzes the formation of carbamoyl phosphate from the ammonia moiety of glutamine, carbonate, and phosphate donated by ATP, constituting the first step of 2 biosynthetic pathways, one leading to arginine and/or urea and the other to pyrimidine nucleotides. The small subunit (glutamine amidotransferase) binds and cleaves glutamine to supply the large subunit with the substrate ammonia. The chain is Carbamoyl phosphate synthase small chain from Bifidobacterium longum (strain DJO10A).